The primary structure comprises 226 residues: Lysoplasmalogenase TMEM86B (226 aa).

Topologically, residues Met1–Arg23 are cytoplasmic. The helical transmembrane segment at Trp24 to Ile40 threads the bilayer. At Pro41–Ser46 the chain is on the extracellular side. Residues Trp47 to Ala68 traverse the membrane as a helical segment. The Cytoplasmic portion of the chain corresponds to Pro69 to Thr74. A helical transmembrane segment spans residues Trp75–Trp93. Over Pro94–Tyr99 the chain is Extracellular. The chain crosses the membrane as a helical span at residues Gly100–Leu117. Residues Thr118–Gly123 lie on the Cytoplasmic side of the membrane. The helical transmembrane segment at Leu124–Leu140 threads the bilayer. Residues Leu141 to Gly146 are Extracellular-facing. Residues Met147 to Trp163 traverse the membrane as a helical segment. The Cytoplasmic portion of the chain corresponds to Arg164–Ser171. Residues Ala172–Trp188 traverse the membrane as a helical segment. Over Asp189 to Arg199 the chain is Extracellular. Residues Leu200–Leu218 traverse the membrane as a helical segment. At Arg219–His226 the chain is on the cytoplasmic side.

It belongs to the TMEM86 family. Homodimer. As to expression, enriched in liver. Also detected in brain and testis.

It localises to the endoplasmic reticulum membrane. Its subcellular location is the cytoplasm. The enzyme catalyses a 1-O-(1Z-alkenyl)-sn-glycero-3-phosphocholine + H2O = a 2,3-saturated aldehyde + sn-glycerol 3-phosphocholine. It catalyses the reaction a 1-O-(1Z-alkenyl)-sn-glycero-3-phosphoethanolamine + H2O = a 2,3-saturated aldehyde + sn-glycero-3-phosphoethanolamine. Its activity is regulated as follows. Competitively inhibited by lysophosphatidic acid. Catalyzes the hydrolysis of the vinyl ether bond of choline or ethanolamine lysoplasmalogens, forming fatty aldehyde and glycerophosphocholine or glycerophosphoethanolamine, respectively and is specific for the sn-2-deacylated (lyso) form of plasmalogen. In Mus musculus (Mouse), this protein is Lysoplasmalogenase TMEM86B (Tmem86b).